The primary structure comprises 209 residues: MGKVYVFDHPLIQHKLTYIRNENTGTKDFRDLVDEVASLMAFEITRDLPLKEVEVKTPVQTATSKVISGKKLGIVPILRAGLGMVDGMLKLIPAAKVGHVGLYRDPETLKPVEYYVKLPSDVEEREFIVVDPMLATGGSAVEAINSLKKRGARNIRFMCLVAAPEGVEELQKHHSDVDIYIAALDEKLNEKGYIVPGLGDAGDRLYGTK.

5-phospho-alpha-D-ribose 1-diphosphate contacts are provided by residues Arg-79, Arg-104, and 131–139 (DPMLATGGS). Residues Ile-194 and 199 to 201 (GDA) each bind uracil. Asp-200 is a binding site for 5-phospho-alpha-D-ribose 1-diphosphate.

This sequence belongs to the UPRTase family. Mg(2+) serves as cofactor.

The enzyme catalyses UMP + diphosphate = 5-phospho-alpha-D-ribose 1-diphosphate + uracil. The protein operates within pyrimidine metabolism; UMP biosynthesis via salvage pathway; UMP from uracil: step 1/1. With respect to regulation, allosterically activated by GTP. Functionally, catalyzes the conversion of uracil and 5-phospho-alpha-D-ribose 1-diphosphate (PRPP) to UMP and diphosphate. This Bacillus velezensis (strain DSM 23117 / BGSC 10A6 / LMG 26770 / FZB42) (Bacillus amyloliquefaciens subsp. plantarum) protein is Uracil phosphoribosyltransferase.